The sequence spans 485 residues: D-alanine--D-alanyl carrier protein ligase (485 aa).

Position 144-145 (144-145 (TS)) interacts with ATP. D189 lines the D-alanine pocket. 284–289 (NTYGPT) lines the ATP pocket. V293 serves as a coordination point for D-alanine. ATP-binding residues include D365 and K473. Residue K473 participates in D-alanine binding.

It belongs to the ATP-dependent AMP-binding enzyme family. DltA subfamily.

The protein localises to the cytoplasm. It catalyses the reaction holo-[D-alanyl-carrier protein] + D-alanine + ATP = D-alanyl-[D-alanyl-carrier protein] + AMP + diphosphate. Its pathway is cell wall biogenesis; lipoteichoic acid biosynthesis. Catalyzes the first step in the D-alanylation of lipoteichoic acid (LTA), the activation of D-alanine and its transfer onto the D-alanyl carrier protein (Dcp) DltC. In an ATP-dependent two-step reaction, forms a high energy D-alanyl-AMP intermediate, followed by transfer of the D-alanyl residue as a thiol ester to the phosphopantheinyl prosthetic group of the Dcp. D-alanylation of LTA plays an important role in modulating the properties of the cell wall in Gram-positive bacteria, influencing the net charge of the cell wall. This is D-alanine--D-alanyl carrier protein ligase from Staphylococcus haemolyticus (strain JCSC1435).